A 95-amino-acid chain; its full sequence is Opiscorpine-3 (95 aa).

Positions 1 to 19 (MNNKLTALIFLGLLAIASC) are cleaved as a signal peptide. Residues 55–95 (EFMCVANVDMTKSCDTHCQKASGEKGYCHGTKCKCGVPLSY) enclose the BetaSPN-type CS-alpha/beta domain. 3 disulfide bridges follow: cysteine 58–cysteine 82, cysteine 68–cysteine 87, and cysteine 72–cysteine 89.

It belongs to the long chain scorpion toxin family. Class 3 subfamily. Expressed by the venom gland.

The protein resides in the secreted. Its function is as follows. Has antimicrobial activity against yeasts and bacteria. This chain is Opiscorpine-3, found in Opistophthalmus carinatus (African yellow leg scorpion).